A 316-amino-acid chain; its full sequence is N-acetylmuramic acid 6-phosphate etherase (316 aa).

The tract at residues 1–24 (MTRFQSDAAVSADRGHLMTEQPNP) is disordered. The SIS domain occupies 66–229 (IASRLKDGGR…STAVMVRLGK (164 aa)). Glu-94 functions as the Proton donor in the catalytic mechanism. Glu-125 is an active-site residue.

The protein belongs to the GCKR-like family. MurNAc-6-P etherase subfamily. Homodimer.

The enzyme catalyses N-acetyl-D-muramate 6-phosphate + H2O = N-acetyl-D-glucosamine 6-phosphate + (R)-lactate. It functions in the pathway amino-sugar metabolism; N-acetylmuramate degradation. Functionally, specifically catalyzes the cleavage of the D-lactyl ether substituent of MurNAc 6-phosphate, producing GlcNAc 6-phosphate and D-lactate. The sequence is that of N-acetylmuramic acid 6-phosphate etherase from Parasynechococcus marenigrum (strain WH8102).